Here is a 345-residue protein sequence, read N- to C-terminus: Glycerol-3-phosphate dehydrogenase [NAD(P)+] (345 aa).

Residues serine 11, tryptophan 12, arginine 32, arginine 33, and lysine 105 each coordinate NADPH. Residues lysine 105, glycine 136, and serine 138 each coordinate sn-glycerol 3-phosphate. Alanine 140 provides a ligand contact to NADPH. Positions 191, 244, 254, 255, and 256 each coordinate sn-glycerol 3-phosphate. The active-site Proton acceptor is lysine 191. NADPH is bound at residue arginine 255. Positions 279 and 281 each coordinate NADPH.

Belongs to the NAD-dependent glycerol-3-phosphate dehydrogenase family.

It localises to the cytoplasm. It catalyses the reaction sn-glycerol 3-phosphate + NAD(+) = dihydroxyacetone phosphate + NADH + H(+). The catalysed reaction is sn-glycerol 3-phosphate + NADP(+) = dihydroxyacetone phosphate + NADPH + H(+). It participates in membrane lipid metabolism; glycerophospholipid metabolism. Its function is as follows. Catalyzes the reduction of the glycolytic intermediate dihydroxyacetone phosphate (DHAP) to sn-glycerol 3-phosphate (G3P), the key precursor for phospholipid synthesis. This is Glycerol-3-phosphate dehydrogenase [NAD(P)+] from Halalkalibacterium halodurans (strain ATCC BAA-125 / DSM 18197 / FERM 7344 / JCM 9153 / C-125) (Bacillus halodurans).